The primary structure comprises 479 residues: Serine palmitoyltransferase 1 (479 aa).

Over 1–16 (MFLFDIYNNILYYTKE) the chain is Lumenal. Residues 17–37 (FIVTSTSPNLFIHGLMAVFII) form a helical membrane-spanning segment. Topologically, residues 38-479 (YLLTKRPFKP…KCTSFVLESN (442 aa)) are cytoplasmic.

This sequence belongs to the class-II pyridoxal-phosphate-dependent aminotransferase family. Forms a heterodimer with sptB. Requires pyridoxal 5'-phosphate as cofactor.

It localises to the endoplasmic reticulum membrane. It carries out the reaction L-serine + hexadecanoyl-CoA + H(+) = 3-oxosphinganine + CO2 + CoA. It functions in the pathway lipid metabolism; sphingolipid metabolism. Its function is as follows. Component of serine palmitoyltransferase (SPT), which catalyzes the committed step in the synthesis of sphingolipids, the condensation of serine with palmitoyl CoA to form the long chain base 3-ketosphinganine. This Dictyostelium discoideum (Social amoeba) protein is Serine palmitoyltransferase 1 (sptA).